The chain runs to 141 residues: uncharacterized protein (141 aa).

5 consecutive transmembrane segments (helical) span residues 7–27 (FWAL…KVGV), 34–54 (FATL…VAAT), 69–89 (LFLA…FRAL), 97–117 (VAPL…LFLG), and 121–141 (NLMN…LAVF). Positions 14–140 (AFAALTAVFA…IAAGALLLAV (127 aa)) constitute an EamA domain.

The protein belongs to the EamA transporter family.

The protein localises to the cell membrane. This is an uncharacterized protein from Sinorhizobium sp.